A 981-amino-acid polypeptide reads, in one-letter code: Bifunctional glutamine synthetase adenylyltransferase/adenylyl-removing enzyme (981 aa).

The adenylyl removase stretch occupies residues 1–473 (MTMPLPSIEQ…RSVFNNLIGF (473 aa)). The interval 479–981 (ADDSDNAWSD…HQIWQKLFFE (503 aa)) is adenylyl transferase.

It belongs to the GlnE family. Mg(2+) is required as a cofactor.

It carries out the reaction [glutamine synthetase]-O(4)-(5'-adenylyl)-L-tyrosine + phosphate = [glutamine synthetase]-L-tyrosine + ADP. It catalyses the reaction [glutamine synthetase]-L-tyrosine + ATP = [glutamine synthetase]-O(4)-(5'-adenylyl)-L-tyrosine + diphosphate. In terms of biological role, involved in the regulation of glutamine synthetase GlnA, a key enzyme in the process to assimilate ammonia. When cellular nitrogen levels are high, the C-terminal adenylyl transferase (AT) inactivates GlnA by covalent transfer of an adenylyl group from ATP to specific tyrosine residue of GlnA, thus reducing its activity. Conversely, when nitrogen levels are low, the N-terminal adenylyl removase (AR) activates GlnA by removing the adenylyl group by phosphorolysis, increasing its activity. The regulatory region of GlnE binds the signal transduction protein PII (GlnB) which indicates the nitrogen status of the cell. The sequence is that of Bifunctional glutamine synthetase adenylyltransferase/adenylyl-removing enzyme from Mannheimia succiniciproducens (strain KCTC 0769BP / MBEL55E).